The following is a 454-amino-acid chain: tRNA modification GTPase MnmE (454 aa).

Residues R23, E80, and K120 each contribute to the (6S)-5-formyl-5,6,7,8-tetrahydrofolate site. The 162-residue stretch at 216–377 (GMKVVIAGRP…LRNHLKQSMG (162 aa)) folds into the TrmE-type G domain. N226 provides a ligand contact to K(+). GTP contacts are provided by residues 226–231 (NAGKSS), 245–251 (TDIAGTT), 270–273 (DTAG), 335–338 (NKAD), and 358–360 (SAR). Mg(2+) is bound at residue S230. Residues T245, I247, and T250 each coordinate K(+). T251 provides a ligand contact to Mg(2+). K454 lines the (6S)-5-formyl-5,6,7,8-tetrahydrofolate pocket.

Belongs to the TRAFAC class TrmE-Era-EngA-EngB-Septin-like GTPase superfamily. TrmE GTPase family. Homodimer. Heterotetramer of two MnmE and two MnmG subunits. K(+) serves as cofactor.

It is found in the cytoplasm. Functionally, exhibits a very high intrinsic GTPase hydrolysis rate. Involved in the addition of a carboxymethylaminomethyl (cmnm) group at the wobble position (U34) of certain tRNAs, forming tRNA-cmnm(5)s(2)U34. This is tRNA modification GTPase MnmE from Shigella boydii serotype 18 (strain CDC 3083-94 / BS512).